The chain runs to 362 residues: Biotin synthase (362 aa).

The interval 14-39 (AQRTPEPLPPTSQGLARPSHDVVRGP) is disordered. Residues 87-316 (HKGGPAALCG…ARDILVCGGR (230 aa)) enclose the Radical SAM core domain. [4Fe-4S] cluster-binding residues include C105, C109, and C112. Positions 181 and 241 each coordinate [2Fe-2S] cluster.

Belongs to the radical SAM superfamily. Biotin synthase family. As to quaternary structure, homodimer. [4Fe-4S] cluster is required as a cofactor. Requires [2Fe-2S] cluster as cofactor.

It catalyses the reaction (4R,5S)-dethiobiotin + (sulfur carrier)-SH + 2 reduced [2Fe-2S]-[ferredoxin] + 2 S-adenosyl-L-methionine = (sulfur carrier)-H + biotin + 2 5'-deoxyadenosine + 2 L-methionine + 2 oxidized [2Fe-2S]-[ferredoxin]. Its pathway is cofactor biosynthesis; biotin biosynthesis; biotin from 7,8-diaminononanoate: step 2/2. Catalyzes the conversion of dethiobiotin (DTB) to biotin by the insertion of a sulfur atom into dethiobiotin via a radical-based mechanism. The sequence is that of Biotin synthase from Nitratidesulfovibrio vulgaris (strain ATCC 29579 / DSM 644 / CCUG 34227 / NCIMB 8303 / VKM B-1760 / Hildenborough) (Desulfovibrio vulgaris).